Reading from the N-terminus, the 300-residue chain is Cation-efflux pump FieF (300 aa).

A run of 4 helical transmembrane segments spans residues 12–32, 39–59, 82–102, and 114–134; these read AAIAATAMASLLLLIKIFAWW, ILAALVDSLVDIGASLTNLLV, AALAQSMFISGSALFLFLTGI, and PGVGVIVTIVALICTIILVSF. 2 residues coordinate Zn(2+): aspartate 45 and aspartate 49. Residues histidine 153 and aspartate 157 each contribute to the Zn(2+) site. 2 helical membrane-spanning segments follow: residues 156-176 and 178-198; these read SDVMMNGAILLALGLSWYGWH and ADALFALGIGIYILYSALRMG.

This sequence belongs to the cation diffusion facilitator (CDF) transporter (TC 2.A.4) family. FieF subfamily. Homodimer.

It localises to the cell inner membrane. The enzyme catalyses Zn(2+)(in) + H(+)(out) = Zn(2+)(out) + H(+)(in). The catalysed reaction is Cd(2+)(in) + H(+)(out) = Cd(2+)(out) + H(+)(in). It catalyses the reaction Fe(2+)(in) + H(+)(out) = Fe(2+)(out) + H(+)(in). Functionally, divalent metal cation transporter which exports Zn(2+), Cd(2+) and possibly Fe(2+). May be involved in zinc and iron detoxification by efflux. In Escherichia coli O157:H7 (strain EC4115 / EHEC), this protein is Cation-efflux pump FieF.